The chain runs to 282 residues: Leucine-rich protein (282 aa).

In terms of biological role, not essential for viability or growth. Nevertheless, uncontrolled production in E.coli is detrimental to the normal physiology of the bacteria. The protein is Leucine-rich protein (lrp) of Streptococcus dysgalactiae subsp. equisimilis (Streptococcus equisimilis).